The primary structure comprises 195 residues: Interferon tau-8 (195 aa).

The first 23 residues, 1–23, serve as a signal peptide directing secretion; the sequence is MAFVLSLLMALVLVSYGPGGSLG. 2 cysteine pairs are disulfide-bonded: C24-C122 and C52-C162.

Belongs to the alpha/beta interferon family. IFN-alphaII subfamily. As to expression, constitutively and exclusively expressed in the mononuclear cells of the extraembryonic trophectoderm.

The protein localises to the secreted. Its function is as follows. Paracrine hormone primarily responsible for maternal recognition of pregnancy. Interacts with endometrial receptors, probably type I interferon receptors, and blocks estrogen receptor expression, preventing the estrogen-induced increase in oxytocin receptor expression in the endometrium. This results in the suppression of the pulsatile endometrial release of the luteolytic hormone prostaglandin F2-alpha, hindering the regression of the corpus luteum (luteolysis) and therefore a return to ovarian cyclicity. This, and a possible direct effect of IFN-tau on prostaglandin synthesis, leads in turn to continued ovarian progesterone secretion, which stimulates the secretion by the endometrium of the nutrients required for the growth of the conceptus. In summary, displays particularly high antiviral and antiproliferative potency concurrently with particular weak cytotoxicity, high antiluteolytic activity and immunomodulatory properties. In contrast with other IFNs, IFN-tau is not virally inducible. The chain is Interferon tau-8 (IFNT8) from Ovis aries (Sheep).